Consider the following 160-residue polypeptide: Thebaine synthase 2 (160 aa).

Serine 74 serves as a coordination point for thebaine. Residue histidine 89 is the Proton acceptor of the active site. A thebaine-binding site is contributed by threonine 105.

Belongs to the MLP family. Homodimer (allosteric) and oligomers. Expressed in poppy latex.

It carries out the reaction (7S)-O-acetylsalutaridinol = thebaine + acetate + H(+). Its pathway is alkaloid biosynthesis; morphine biosynthesis. With respect to regulation, slightly inhibited by salutaridine and (7S)-salutaridinol. Functionally, catalyzes the formation of thebaine from (7S)-salutaridinol 7-O-acetate at the expense of labile hydroxylated by-products, which are preferentially produced by spontaneous allylic elimination. No visible activity toward (7S)-salutaridinol (at pH 7). The protein is Thebaine synthase 2 of Papaver somniferum (Opium poppy).